The chain runs to 96 residues: Bublin coiled-coil protein (96 aa).

A coiled-coil region spans residues 39–79 (NSCLDDIEDRNDALNGKLHELLESNRQARKDFRQQLNDEEA). Residues 63 to 96 (NRQARKDFRQQLNDEEASPPPAEDPASRDTQTED) form a disordered region. A compositionally biased stretch (basic and acidic residues) spans 87 to 96 (PASRDTQTED).

Belongs to the UPF0184 (EST00098) family.

Its subcellular location is the cell junction. It localises to the cytoplasm. It is found in the cytoskeleton. In terms of biological role, essential for intermediate filament organization in intestinal cells, interacts with intermediate filament and regulates intestinal lumen morphology. The chain is Bublin coiled-coil protein (bbln) from Ctenopharyngodon idella (Grass carp).